A 161-amino-acid chain; its full sequence is Protein translocase subunit SecE (161 aa).

A compositionally biased stretch (acidic residues) spans 1-12 (MSDEGDVADEAV). The interval 1 to 80 (MSDEGDVADE…GVAKDDSTTK (80 aa)) is disordered. The chain crosses the membrane as a helical span at residues 133-153 (VVLAFLAFMVALVAGADLGLT).

This sequence belongs to the SecE/SEC61-gamma family. As to quaternary structure, component of the Sec protein translocase complex. Heterotrimer consisting of SecY, SecE and SecG subunits. The heterotrimers can form oligomers, although 1 heterotrimer is thought to be able to translocate proteins. Interacts with the ribosome. Interacts with SecDF, and other proteins may be involved. Interacts with SecA.

Its subcellular location is the cell membrane. In terms of biological role, essential subunit of the Sec protein translocation channel SecYEG. Clamps together the 2 halves of SecY. May contact the channel plug during translocation. The sequence is that of Protein translocase subunit SecE from Mycobacterium bovis (strain ATCC BAA-935 / AF2122/97).